A 247-amino-acid polypeptide reads, in one-letter code: 3-oxoacyl-[acyl-carrier-protein] reductase MabA (247 aa).

NADP(+) is bound by residues 25–27 (RGI), Arg47, 61–62 (DV), Gly90, Tyr153, Lys157, Ile186, and Arg197. Catalysis depends on Tyr153, which acts as the Proton acceptor.

The protein belongs to the short-chain dehydrogenases/reductases (SDR) family. In terms of assembly, homotetramer.

It is found in the secreted. Its subcellular location is the cell wall. It catalyses the reaction a (3R)-hydroxyacyl-[ACP] + NADP(+) = a 3-oxoacyl-[ACP] + NADPH + H(+). The protein operates within lipid metabolism; mycolic acid biosynthesis. Its function is as follows. Part of the mycobacterial fatty acid elongation system FAS-II, which is involved in mycolic acid biosynthesis. Catalyzes the NADPH-dependent reduction of beta-ketoacyl derivatives, the second step of the FAS-II elongation cycle. The polypeptide is 3-oxoacyl-[acyl-carrier-protein] reductase MabA (Mycobacterium bovis (strain ATCC BAA-935 / AF2122/97)).